A 554-amino-acid chain; its full sequence is Asparagine--tRNA ligase, cytoplasmic (554 aa).

This sequence belongs to the class-II aminoacyl-tRNA synthetase family.

It localises to the cytoplasm. It is found in the cytosol. It carries out the reaction tRNA(Asn) + L-asparagine + ATP = L-asparaginyl-tRNA(Asn) + AMP + diphosphate + H(+). Catalyzes the attachment of asparagine to tRNA(Asn) in a two-step reaction: asparagine is first activated by ATP to form Asn-AMP and then transferred to the acceptor end of tRNA(Asn). This chain is Asparagine--tRNA ligase, cytoplasmic, found in Saccharomyces cerevisiae (strain ATCC 204508 / S288c) (Baker's yeast).